Reading from the N-terminus, the 245-residue chain is Superoxide dismutase [Mn], mitochondrial (245 aa).

A mitochondrion-targeting transit peptide spans 1 to 32 (MVNLGSIWQNLLASQAPLQSMTGNATTMAGLA). The Mn(2+) site is built by H58, H106, D196, and H200.

It belongs to the iron/manganese superoxide dismutase family. Homotetramer. Requires Mn(2+) as cofactor.

The protein resides in the mitochondrion matrix. It carries out the reaction 2 superoxide + 2 H(+) = H2O2 + O2. In terms of biological role, destroys superoxide anion radicals which are normally produced within the cells and which are toxic to biological systems. The sequence is that of Superoxide dismutase [Mn], mitochondrial (sod-2) from Neurospora crassa (strain ATCC 24698 / 74-OR23-1A / CBS 708.71 / DSM 1257 / FGSC 987).